The primary structure comprises 937 residues: Isoleucine--tRNA ligase (937 aa).

Residues 58–68 (PYANGHIHLGT) carry the 'HIGH' region motif. Glu566 serves as a coordination point for L-isoleucyl-5'-AMP. The 'KMSKS' region motif lies at 607 to 611 (KMSKS). ATP is bound at residue Lys610. Zn(2+)-binding residues include Cys906, Cys909, Cys925, and Cys928.

Belongs to the class-I aminoacyl-tRNA synthetase family. IleS type 1 subfamily. As to quaternary structure, monomer. Zn(2+) serves as cofactor.

It is found in the cytoplasm. It carries out the reaction tRNA(Ile) + L-isoleucine + ATP = L-isoleucyl-tRNA(Ile) + AMP + diphosphate. Functionally, catalyzes the attachment of isoleucine to tRNA(Ile). As IleRS can inadvertently accommodate and process structurally similar amino acids such as valine, to avoid such errors it has two additional distinct tRNA(Ile)-dependent editing activities. One activity is designated as 'pretransfer' editing and involves the hydrolysis of activated Val-AMP. The other activity is designated 'posttransfer' editing and involves deacylation of mischarged Val-tRNA(Ile). The polypeptide is Isoleucine--tRNA ligase (Lawsonia intracellularis (strain PHE/MN1-00)).